The sequence spans 291 residues: Oligopeptide transport system permease protein OppC (291 aa).

Transmembrane regions (helical) follow at residues 22–42 (VASL…PPLL), 85–105 (MLIG…VGAI), 116–136 (TLMW…IAIV), 142–162 (NSAN…MISS), 209–229 (ALNV…GFGI), and 247–267 (ATAF…ILVC). The ABC transmembrane type-1 domain maps to 81–272 (MQKSMLIGVC…LILVCANLTG (192 aa)).

The protein belongs to the binding-protein-dependent transport system permease family. OppBC subfamily. The complex is composed of an ATP-binding protein (OppD), two transmembrane proteins (OppB and OppC) and a solute-binding protein (OppA).

The protein resides in the cell inner membrane. Functionally, part of the ABC transporter complex OppABCD involved in the uptake of oligopeptides. Responsible for the translocation of the substrate across the membrane. This Mycobacterium bovis (strain ATCC BAA-935 / AF2122/97) protein is Oligopeptide transport system permease protein OppC.